The chain runs to 138 residues: Large ribosomal subunit protein uL16 (138 aa).

Basic residues predominate over residues 1–13; it reads MLQPSRRKFRKEQ. The tract at residues 1–22 is disordered; it reads MLQPSRRKFRKEQKGRNTGIAT.

The protein belongs to the universal ribosomal protein uL16 family. In terms of assembly, part of the 50S ribosomal subunit.

Functionally, binds 23S rRNA and is also seen to make contacts with the A and possibly P site tRNAs. In Methylibium petroleiphilum (strain ATCC BAA-1232 / LMG 22953 / PM1), this protein is Large ribosomal subunit protein uL16.